Here is a 266-residue protein sequence, read N- to C-terminus: Proteasome subunit alpha type-1 (266 aa).

The protein belongs to the peptidase T1A family. The 26S proteasome consists of a 20S proteasome core and two 19S regulatory subunits. The 20S proteasome core is composed of 28 subunits that are arranged in four stacked rings, resulting in a barrel-shaped structure. The two end rings are each formed by seven alpha subunits, and the two central rings are each formed by seven beta subunits. The catalytic chamber with the active sites is on the inside of the barrel.

The protein localises to the cytoplasm. It localises to the nucleus. The proteasome is a multicatalytic proteinase complex which is characterized by its ability to cleave peptides with Arg, Phe, Tyr, Leu, and Glu adjacent to the leaving group at neutral or slightly basic pH. The proteasome has an ATP-dependent proteolytic activity. The polypeptide is Proteasome subunit alpha type-1 (Trypanosoma brucei brucei).